Here is a 113-residue protein sequence, read N- to C-terminus: U11-theraphotoxin-Hhn1f (113 aa).

The first 21 residues, 1-21 (MNTVRVTFLLVFVLAVSLGQA), serve as a signal peptide directing secretion. The propeptide occupies 22–74 (DKDENRMEMQEKTEQGKSYLDFAENLLLQKLEELEAKLLEEDSKESRNSRQKR). A disordered region spans residues 61–82 (EEDSKESRNSRQKRCIGEGVPC). Cystine bridges form between cysteine 75/cysteine 90, cysteine 82/cysteine 95, and cysteine 89/cysteine 110.

This sequence belongs to the neurotoxin 14 (magi-1) family. 01 (HNTX-16) subfamily. As to expression, expressed by the venom gland.

It is found in the secreted. Its function is as follows. Probable ion channel inhibitor. This is U11-theraphotoxin-Hhn1f from Cyriopagopus hainanus (Chinese bird spider).